We begin with the raw amino-acid sequence, 444 residues long: Transposase for insertion sequence element IS1557 (444 aa).

Positions 273–292 are disordered; it reads PKWGRGRPGKNAAPRPGRER.

This sequence belongs to the transposase 12 family.

This chain is Transposase for insertion sequence element IS1557, found in Mycobacterium tuberculosis (strain CDC 1551 / Oshkosh).